The chain runs to 595 residues: Leiomodin-1 (595 aa).

2 disordered regions span residues 1–322 (MSKV…KVKN) and 467–568 (DKQR…QEKN). A Phosphoserine modification is found at S12. Acidic residues predominate over residues 27 to 40 (EEMEELEKELDVVD). 8 stretches are compositionally biased toward basic and acidic residues: residues 72-105 (CEKESKKIIQREMSVDESKQVGRKTDAKNGEDKG), 117-127 (QDSDVGKEPKK), 134-193 (FSRD…EKTG), 201-224 (SRDKDKKREEVKEPSKKEEVKLTA), 232-251 (RQEDGKQKESREDRDKKPEV), 259-289 (RDSRKEDEKVKKEETQPDKGVREEGKTREKQ), 467-476 (DKQRQKRLQE), and 484-493 (SGEKKDRLEV). S85 carries the phosphoserine modification. Phosphoserine is present on S135. 8 repeat units span residues 165-180 (AAVDRKEAGKDGREER), 181-196 (AAATTKKEEEKTGSVR), 197-212 (NAGLSRDKDKKREEVK), 213-227 (EPSKKEEVKLTAENR), 228-243 (STVGRQEDGKQKESRE), 244-257 (DRDKKPEVKGIGCG), 258-273 (SRDSRKEDEKVKKEET), and 274-288 (QPDKGVREEGKTREK). An 8 X approximate tandem repeats region spans residues 165–288 (AAVDRKEAGK…VREEGKTREK (124 aa)). Pro residues-rich tracts occupy residues 503-513 (SPKPSPQPSPK) and 527-538 (AAPPPPPPPLAP). A 5 X 4 AA approximate tandem repeats region spans residues 503–522 (SPKPSPQPSPKSAPKNSPKK). A Phosphoserine modification is found at S550. The WH2 domain occupies 569 to 588 (SRDQLLAAIRSSNLKQLKKV).

Detected in smooth muscle, in stomach and uterus, blood vessel wall, and in slow fibers in extraocular muscle, urinary bladder and sternothyroid muscle (at protein level).

Its subcellular location is the cytoplasm. The protein localises to the myofibril. It is found in the sarcomere. The protein resides in the cytoskeleton. Functionally, required for proper contractility of visceral smooth muscle cells. Mediates nucleation of actin filaments. This is Leiomodin-1 from Rattus norvegicus (Rat).